The sequence spans 296 residues: Indole-3-glycerol phosphate synthase (296 aa).

It belongs to the TrpC family.

It carries out the reaction 1-(2-carboxyphenylamino)-1-deoxy-D-ribulose 5-phosphate + H(+) = (1S,2R)-1-C-(indol-3-yl)glycerol 3-phosphate + CO2 + H2O. Its pathway is amino-acid biosynthesis; L-tryptophan biosynthesis; L-tryptophan from chorismate: step 4/5. The chain is Indole-3-glycerol phosphate synthase from Microcystis aeruginosa (strain NIES-843 / IAM M-2473).